The sequence spans 383 residues: Chitinase-3-like protein 1 (383 aa).

The signal sequence occupies residues 1–21; sequence MGLRASGTGFVVLVLLQSCAA. In terms of domain architecture, GH18 spans 22-383; the sequence is YKLICYYTSW…SAVKDVLAEV (362 aa). Cysteines 26 and 51 form a disulfide. Asn60 carries N-linked (GlcNAc...) asparagine glycosylation. Chitin is bound by residues 70–71, 97–100, Tyr141, 204–207, and Arg263; these read EW, GGWN, and LTYD. A disulfide bond links Cys300 and Cys364. The tract at residues 324 to 338 is important for AKT1 activation and IL8 production; sequence QWVAYDDQESVKNKA. Trp352 contacts chitin. Asn367 carries an N-linked (GlcNAc...) asparagine glycan.

This sequence belongs to the glycosyl hydrolase 18 family. As to quaternary structure, monomer.

It localises to the secreted. It is found in the extracellular space. The protein resides in the cytoplasm. The protein localises to the perinuclear region. Its subcellular location is the endoplasmic reticulum. Carbohydrate-binding lectin with a preference for chitin. Has no chitinase activity. May play a role in tissue remodeling and in the capacity of cells to respond to and cope with changes in their environment. Plays a role in T-helper cell type 2 (Th2) inflammatory response and IL-13-induced inflammation, regulating allergen sensitization, inflammatory cell apoptosis, dendritic cell accumulation and M2 macrophage differentiation. Facilitates invasion of pathogenic enteric bacteria into colonic mucosa and lymphoid organs. Mediates activation of AKT1 signaling pathway and subsequent IL8 production in colonic epithelial cells. Regulates antibacterial responses in lung by contributing to macrophage bacterial killing, controlling bacterial dissemination and augmenting host tolerance. Also regulates hyperoxia-induced injury, inflammation and epithelial apoptosis in lung. The sequence is that of Chitinase-3-like protein 1 (CHI3L1) from Capra hircus (Goat).